The sequence spans 355 residues: Alanine racemase (355 aa).

The Proton acceptor; specific for D-alanine role is filled by Lys34. Lys34 is modified (N6-(pyridoxal phosphate)lysine). Arg133 provides a ligand contact to substrate. The active-site Proton acceptor; specific for L-alanine is the Tyr249. Met297 provides a ligand contact to substrate.

The protein belongs to the alanine racemase family. Pyridoxal 5'-phosphate is required as a cofactor.

The enzyme catalyses L-alanine = D-alanine. Its pathway is amino-acid biosynthesis; D-alanine biosynthesis; D-alanine from L-alanine: step 1/1. Functionally, catalyzes the interconversion of L-alanine and D-alanine. May also act on other amino acids. This Rickettsia rickettsii (strain Sheila Smith) protein is Alanine racemase (alr).